Consider the following 501-residue polypeptide: MPDTASYKQQKEDFVSNLSGGSVAEINYVTSVAAVAILLWSVLQARQSFFEPYTALAFAVDFLLNVGAILLSVTLYSNSPLLLNLLLIAPAILVFTLPPRSRSPKKKAKIPPNARSNESSGQLDILSTKPFLTNFRGCMLIVTCVAILAVDFRLFPRRFAKVETWGTSLMDLGVGSFVFSAGLVAARPVLREKATGRAGAVGNALSLSSRLVQSLRHSIPLLVLGFIRFLSVKGLDYAEHVTEYGVHWNFFFTLGFLPPFVAIFQSVRKLIPSFAALSLLVGVTYQVLLETTSLKAYVLTAPRTDLISMNREGIFSFVGYLAIFLAGQDTGMFVIPRNLVPKSTASPGAQRNKLLKITAVWGGVWTGLYVLSTNYHYGFGLAVSRRMANLPYVLWVVAFNTIQLLGFAVIDTIFFPAFYNAQDAKTEKEAYTHATSRVMRAYNRNGLAVFLLANLLTGLVNMTVNTLDATPIATMGILVVYSAALTGVAVALDAYNISIKL.

Asn17 carries an N-linked (GlcNAc...) asparagine glycan. A run of 3 helical transmembrane segments spans residues 23–43, 55–75, and 79–99; these read VAEI…WSVL, ALAF…SVTL, and SPLL…TLPP. A disordered region spans residues 101-121; that stretch reads SRSPKKKAKIPPNARSNESSG. The N-linked (GlcNAc...) asparagine glycan is linked to Asn117. 10 helical membrane-spanning segments follow: residues 130–150, 165–185, 218–238, 244–264, 270–290, 314–334, 363–383, 390–410, 447–467, and 472–492; these read PFLT…ILAV, WGTS…GLVA, SIPL…LDYA, YGVH…VAIF, LIPS…VLLE, IFSF…GMFV, GVWT…GLAV, LPYV…FAVI, LAVF…VNTL, and IATM…AVAL. Asn496 is a glycosylation site (N-linked (GlcNAc...) asparagine).

This sequence belongs to the PIGW family.

The protein resides in the endoplasmic reticulum membrane. Its pathway is glycolipid biosynthesis; glycosylphosphatidylinositol-anchor biosynthesis. Probable acetyltransferase, which acetylates the inositol ring of phosphatidylinositol during biosynthesis of GPI-anchor. In Gibberella zeae (strain ATCC MYA-4620 / CBS 123657 / FGSC 9075 / NRRL 31084 / PH-1) (Wheat head blight fungus), this protein is GPI-anchored wall transfer protein 1 (GWT1).